A 230-amino-acid chain; its full sequence is Ion-translocating oxidoreductase complex subunit E (230 aa).

The next 5 membrane-spanning stretches (helical) occupy residues 39–59, 69–89, 93–113, 125–145, and 182–202; these read LGLGIATLLVLVGSNVTVSLI, IPVFVMIIASLVTCVQLLMNA, GLYLSLGIFIPLIVTNCIIIG, LPAALDGFWMGMGMTTVLVVL, and SFLLALLPPGAFIGVGLLIAL.

Belongs to the NqrDE/RnfAE family. In terms of assembly, the complex is composed of six subunits: RnfA, RnfB, RnfC, RnfD, RnfE and RnfG.

Its subcellular location is the cell inner membrane. Functionally, part of a membrane-bound complex that couples electron transfer with translocation of ions across the membrane. The sequence is that of Ion-translocating oxidoreductase complex subunit E from Vibrio vulnificus (strain YJ016).